The following is a 335-amino-acid chain: Probable deoxyhypusine synthase (335 aa).

K307 functions as the Nucleophile in the catalytic mechanism.

Belongs to the deoxyhypusine synthase family. The cofactor is NAD(+).

It catalyses the reaction [eIF5A protein]-L-lysine + spermidine = [eIF5A protein]-deoxyhypusine + propane-1,3-diamine. The protein operates within protein modification; eIF5A hypusination. In terms of biological role, catalyzes the NAD-dependent oxidative cleavage of spermidine and the subsequent transfer of the butylamine moiety of spermidine to the epsilon-amino group of a specific lysine residue of the eIF-5A precursor protein to form the intermediate deoxyhypusine residue. In Pyrococcus abyssi (strain GE5 / Orsay), this protein is Probable deoxyhypusine synthase (dys).